Reading from the N-terminus, the 578-residue chain is Pentatricopeptide repeat-containing protein At4g22760 (578 aa).

PPR repeat units lie at residues 68 to 102 (DSFS…GIPP), 103 to 137 (SSHA…GLCG), 138 to 168 (CVYV…IAEK), 169 to 203 (NTVS…DAVS), 204 to 230 (WNLI…MPLK), 231 to 261 (SPAS…MPQK), 262 to 292 (NGVS…MSKK), 293 to 327 (DKLV…NSYI), 330 to 364 (DEIT…GIKI), 365 to 395 (DDLL…LNKK), 396 to 430 (DTVS…KIPP), 431 to 465 (NVVT…NLEP), and 466 to 496 (SADH…MPMQ). Residues 501-576 (VWGALLLASG…TLGCSWVEGS (76 aa)) form a type E motif region.

Belongs to the PPR family. PCMP-E subfamily.

This Arabidopsis thaliana (Mouse-ear cress) protein is Pentatricopeptide repeat-containing protein At4g22760 (PCMP-E6).